We begin with the raw amino-acid sequence, 490 residues long: Cytochrome P450 71A21 (490 aa).

A helical membrane pass occupies residues 1-21 (MESMTMIILQSLIIFITILFF). Cys-432 serves as a coordination point for heme.

The protein belongs to the cytochrome P450 family. It depends on heme as a cofactor.

Its subcellular location is the membrane. The chain is Cytochrome P450 71A21 (CYP71A21) from Arabidopsis thaliana (Mouse-ear cress).